A 191-amino-acid polypeptide reads, in one-letter code: MKTYDFMNVNSFSPKERPIRLFGFEFGASHEESESKDNYNENNESIKDDNKEKRFKCHYCFRNFPTSQALGGHQNAHKRERQQTKRFNLHSNAAAFFHRQQNHIAASRLYEDRYSLEAVQINDARLGLCRMYNSSASFNRDRSSYYNRYIPWFIGDHQTRPTYVGGGSSSHGLFYESKKNVPDHVSLDLRL.

The segment at 55–77 (FKCHYCFRNFPTSQALGGHQNAH) adopts a C2H2-type zinc-finger fold.

In terms of tissue distribution, expressed in inflorescence meristems, floral meristems and stem epidermis.

The protein resides in the nucleus. Probable transcription factor required for the initiation of inflorescence trichomes in response to gibberellin and cytokinin. Is not involved in the regulation of trichome branching. Is functionally equivalent to ZFP8. This chain is Zinc finger protein GIS2 (GIS2), found in Arabidopsis thaliana (Mouse-ear cress).